The primary structure comprises 634 residues: Probable potassium transport system protein Kup (634 aa).

12 helical membrane-spanning segments follow: residues 21 to 41 (LVIG…LYTL), 58 to 78 (VLGI…LKYV), 110 to 130 (MYVV…DGVI), 152 to 172 (PFVV…QRFG), 179 to 199 (AFGP…VYNM), 223 to 243 (WHAV…EALY), 258 to 278 (WQFV…ALML), 296 to 316 (ALYP…QALI), 348 to 368 (IYVP…VIGF), 377 to 397 (AYGV…IIYA), 403 to 423 (VPAP…CAFF), and 427 to 447 (IIKF…LFTL).

It belongs to the HAK/KUP transporter (TC 2.A.72) family.

The protein resides in the cell inner membrane. The catalysed reaction is K(+)(in) + H(+)(in) = K(+)(out) + H(+)(out). Transport of potassium into the cell. Likely operates as a K(+):H(+) symporter. The sequence is that of Probable potassium transport system protein Kup from Xanthomonas euvesicatoria pv. vesicatoria (strain 85-10) (Xanthomonas campestris pv. vesicatoria).